Reading from the N-terminus, the 1754-residue chain is Probable outer membrane protein PmpB (1754 aa).

The first 14 residues, 1-14, serve as a signal peptide directing secretion; it reads MSSMKWLSATAVFA. 2 stretches are compositionally biased toward low complexity: residues 68 to 105 and 212 to 232; these read NIPTTDTTTPTNSNSSSSNGETASVSEDSDSTTTTPDP and SETSGSSSSSGNDSVSSPSSS. 6 disordered regions span residues 68–109, 190–235, 252–271, 397–438, 621–668, and 1299–1332; these read NIPT…KGGG, SSNS…SRAE, PAAQTDTETSTPSHKPGSGG, NADA…ATAK, AAEN…STPS, and TSSASGGSGVSSSIPTNPKRISAAAPSGSAATTP. 2 stretches are compositionally biased toward polar residues: residues 252-264 and 402-412; these read PAAQTDTETSTPS and ASSSPQSGSGA. 4 stretches are compositionally biased toward low complexity: residues 413–427, 636–668, 1299–1311, and 1320–1332; these read TTVSNSGDSSSGSDS, PTADTAEQPAAASAATSTPESAPVVSTALSTPS, TSSASGGSGVSSS, and SAAAPSGSAATTP. The 294-residue stretch at 1461–1754 folds into the Autotransporter domain; sequence DDIAYNNFWV…MTSCGARMIF (294 aa).

Belongs to the PMP outer membrane protein family.

The protein resides in the secreted. The protein localises to the cell wall. Its subcellular location is the cell outer membrane. In Chlamydia trachomatis serovar D (strain ATCC VR-885 / DSM 19411 / UW-3/Cx), this protein is Probable outer membrane protein PmpB (pmpB).